We begin with the raw amino-acid sequence, 479 residues long: Poly(A) polymerase catalytic subunit (479 aa).

Residues Asp-202 and Asp-204 contribute to the active site. Ca(2+)-binding residues include Asp-202, Asp-204, and Asp-253.

Belongs to the poxviridae poly(A) polymerase catalytic subunit family. As to quaternary structure, heterodimer of a large (catalytic) subunit and a small (regulatory) subunit.

The catalysed reaction is RNA(n) + ATP = RNA(n)-3'-adenine ribonucleotide + diphosphate. In terms of biological role, polymerase that creates the 3'-poly(A) tail of mRNA's. In Homo sapiens (Human), this protein is Poly(A) polymerase catalytic subunit (OPG063).